The following is a 986-amino-acid chain: Ephrin type-B receptor 2 (986 aa).

Residues 1–18 form the signal peptide; it reads MAVRRLGAALLLLPLLAA. Residues 19-543 are Extracellular-facing; that stretch reads VEETLMDSTT…QTSIKEKLPL (525 aa). The Eph LBD domain occupies 20–202; the sequence is EETLMDSTTA…FYRKCPRIIQ (183 aa). Cystine bridges form between Cys62–Cys184 and Cys97–Cys107. N-linked (GlcNAc...) asparagine glycosylation is found at Asn265, Asn336, Asn428, and Asn482. 2 consecutive Fibronectin type-III domains span residues 324 to 434 and 435 to 530; these read IPSA…TNQA and APSA…TMTE. Residues 544–564 traverse the membrane as a helical segment; the sequence is IVGSSAAGLVFLIAVVVIAIV. Over 565-986 the chain is Cytoplasmic; the sequence is CNRRGFERAD…QMNQIQSVEV (422 aa). In terms of domain architecture, Protein kinase spans 621–884; the sequence is VKIEQVIGAG…QIVNTLDKMI (264 aa). Residues 627 to 635 and Lys653 contribute to the ATP site; that span reads IGAGEFGEV. Asp746 functions as the Proton acceptor in the catalytic mechanism. Lys891 is covalently cross-linked (Glycyl lysine isopeptide (Lys-Gly) (interchain with G-Cter in ubiquitin)). Residues 913 to 977 form the SAM domain; the sequence is TSFNTVDEWL…LNSIQVMRAQ (65 aa). Residues 984–986 carry the PDZ-binding motif; the sequence is VEV.

It belongs to the protein kinase superfamily. Tyr protein kinase family. Ephrin receptor subfamily. As to quaternary structure, heterotetramer upon binding of the ligand. The heterotetramer is composed of an ephrin dimer and a receptor dimer. Interacts (via PDZ-binding motif) with GRIP1 and PICK1 (via PDZ domain). Interacts with ARHGEF15; mediates ARHGEF15 phosphorylation, ubiquitination and degradation by the proteasome. Interacts with AQP1; involved in endolymph production in the inner ear. Interacts with EFNA5. Interacts with SPSB1. Interacts with SPSB4. Interacts with SH2D3C. In terms of processing, autophosphorylated; ligand binding stimulates autophosphorylation on tyrosine residues. Post-translationally, ligand binding induces cleavage by matrix metalloproteinases (MMPs) such as MMP7/MMP9, producing an EphB2/N-terminal fragment (NTF) and a C-terminal long fragment (EphB2-LF). EphB2-LF is further cleaved by MMPs, producing EphB2/CTF1 which is further cleaved by the PS1/gamma-secretase producing EphB2/CTF2. Polyubiquitinated; ligand binding stimulates ubiquitination. Ubiquitinated by RNF186 at Lys-891, mainly through 'Lys-27'-linked polyubiquitin chains. Ubiquitinated by CRL2(KLHDC2) E3 ligase complex. Expressed in the epithelial dark cells of the inner ear. Expressed in the region of the proximal tubules of the kidney nephron. Expressed in myogenic progenitor cells.

The protein resides in the cell membrane. The protein localises to the cell projection. It is found in the axon. Its subcellular location is the dendrite. The catalysed reaction is L-tyrosyl-[protein] + ATP = O-phospho-L-tyrosyl-[protein] + ADP + H(+). In terms of biological role, receptor tyrosine kinase which binds promiscuously transmembrane ephrin-B family ligands residing on adjacent cells, leading to contact-dependent bidirectional signaling into neighboring cells. The signaling pathway downstream of the receptor is referred to as forward signaling while the signaling pathway downstream of the ephrin ligand is referred to as reverse signaling. Functions in axon guidance during development. Involved in the guidance of commissural axons, that form a major interhemispheric connection between the 2 temporal lobes of the cerebral cortex. Also involved in guidance of contralateral inner ear efferent growth cones at the midline and of retinal ganglion cell axons to the optic disk. In addition to axon guidance, also regulates dendritic spines development and maturation and stimulates the formation of excitatory synapses. Upon activation by EFNB1, abolishes the ARHGEF15-mediated negative regulation on excitatory synapse formation. Controls other aspects of development including angiogenesis, palate development and in inner ear development through regulation of endolymph production. Forward and reverse signaling through the EFNB2/EPHB2 complex regulate movement and adhesion of cells that tubularize the urethra and septate the cloaca. May function as a tumor suppressor. May be involved in the regulation of platelet activation and blood coagulation. This chain is Ephrin type-B receptor 2, found in Mus musculus (Mouse).